Reading from the N-terminus, the 428-residue chain is 3-phosphoshikimate 1-carboxyvinyltransferase (428 aa).

3 residues coordinate 3-phosphoshikimate: lysine 22, serine 23, and arginine 27. Lysine 22 is a phosphoenolpyruvate binding site. Phosphoenolpyruvate-binding residues include glycine 96 and arginine 124. 3-phosphoshikimate-binding residues include serine 169, serine 170, glutamine 171, serine 197, aspartate 313, asparagine 336, and lysine 340. A phosphoenolpyruvate-binding site is contributed by glutamine 171. The Proton acceptor role is filled by aspartate 313. Phosphoenolpyruvate contacts are provided by arginine 344, arginine 386, and lysine 411.

Belongs to the EPSP synthase family. Monomer.

It is found in the cytoplasm. It catalyses the reaction 3-phosphoshikimate + phosphoenolpyruvate = 5-O-(1-carboxyvinyl)-3-phosphoshikimate + phosphate. The protein operates within metabolic intermediate biosynthesis; chorismate biosynthesis; chorismate from D-erythrose 4-phosphate and phosphoenolpyruvate: step 6/7. In terms of biological role, catalyzes the transfer of the enolpyruvyl moiety of phosphoenolpyruvate (PEP) to the 5-hydroxyl of shikimate-3-phosphate (S3P) to produce enolpyruvyl shikimate-3-phosphate and inorganic phosphate. This Proteus mirabilis (strain HI4320) protein is 3-phosphoshikimate 1-carboxyvinyltransferase.